Reading from the N-terminus, the 122-residue chain is Large ribosomal subunit protein bL19 (122 aa).

Belongs to the bacterial ribosomal protein bL19 family.

Functionally, this protein is located at the 30S-50S ribosomal subunit interface and may play a role in the structure and function of the aminoacyl-tRNA binding site. The polypeptide is Large ribosomal subunit protein bL19 (Prosthecochloris aestuarii (strain DSM 271 / SK 413)).